The chain runs to 356 residues: Leucine carboxyl methyltransferase 1 (356 aa).

S-adenosyl-L-methionine-binding positions include Arg78, Gly101, Asp127, Asp183 to Leu184, and Glu218.

This sequence belongs to the methyltransferase superfamily. LCMT family.

The enzyme catalyses [phosphatase 2A protein]-C-terminal L-leucine + S-adenosyl-L-methionine = [phosphatase 2A protein]-C-terminal L-leucine methyl ester + S-adenosyl-L-homocysteine. Its function is as follows. Methylates the carboxyl group of the C-terminal leucine residue of protein phosphatase 2A catalytic subunits to form alpha-leucine ester residues. This is Leucine carboxyl methyltransferase 1 (PPM1) from Cryptococcus neoformans var. neoformans serotype D (strain JEC21 / ATCC MYA-565) (Filobasidiella neoformans).